Here is a 214-residue protein sequence, read N- to C-terminus: Probable nicotinate-nucleotide adenylyltransferase (214 aa).

It belongs to the NadD family.

The enzyme catalyses nicotinate beta-D-ribonucleotide + ATP + H(+) = deamido-NAD(+) + diphosphate. It participates in cofactor biosynthesis; NAD(+) biosynthesis; deamido-NAD(+) from nicotinate D-ribonucleotide: step 1/1. Catalyzes the reversible adenylation of nicotinate mononucleotide (NaMN) to nicotinic acid adenine dinucleotide (NaAD). The chain is Probable nicotinate-nucleotide adenylyltransferase from Psychromonas ingrahamii (strain DSM 17664 / CCUG 51855 / 37).